Here is a 212-residue protein sequence, read N- to C-terminus: Imidazole glycerol phosphate synthase subunit HisH (212 aa).

The Glutamine amidotransferase type-1 domain maps to 2-212 (KVAVIDYGMG…KNFLAWDGNV (211 aa)). Residue Cys-82 is the Nucleophile of the active site. Residues His-190 and Glu-192 contribute to the active site.

In terms of assembly, heterodimer of HisH and HisF.

It is found in the cytoplasm. It catalyses the reaction 5-[(5-phospho-1-deoxy-D-ribulos-1-ylimino)methylamino]-1-(5-phospho-beta-D-ribosyl)imidazole-4-carboxamide + L-glutamine = D-erythro-1-(imidazol-4-yl)glycerol 3-phosphate + 5-amino-1-(5-phospho-beta-D-ribosyl)imidazole-4-carboxamide + L-glutamate + H(+). It carries out the reaction L-glutamine + H2O = L-glutamate + NH4(+). It participates in amino-acid biosynthesis; L-histidine biosynthesis; L-histidine from 5-phospho-alpha-D-ribose 1-diphosphate: step 5/9. In terms of biological role, IGPS catalyzes the conversion of PRFAR and glutamine to IGP, AICAR and glutamate. The HisH subunit catalyzes the hydrolysis of glutamine to glutamate and ammonia as part of the synthesis of IGP and AICAR. The resulting ammonia molecule is channeled to the active site of HisF. The sequence is that of Imidazole glycerol phosphate synthase subunit HisH from Chromobacterium violaceum (strain ATCC 12472 / DSM 30191 / JCM 1249 / CCUG 213 / NBRC 12614 / NCIMB 9131 / NCTC 9757 / MK).